The primary structure comprises 216 residues: Octanoyltransferase (216 aa).

A BPL/LPL catalytic domain is found at 24–212 (KFRKECILFL…NLCSFLEPIN (189 aa)). Residues 69–76 (RGGDFTAH), 140–142 (SIG), and 153–155 (GIA) contribute to the substrate site. Catalysis depends on Cys-171, which acts as the Acyl-thioester intermediate.

The protein belongs to the LipB family.

The protein localises to the cytoplasm. It catalyses the reaction octanoyl-[ACP] + L-lysyl-[protein] = N(6)-octanoyl-L-lysyl-[protein] + holo-[ACP] + H(+). It participates in protein modification; protein lipoylation via endogenous pathway; protein N(6)-(lipoyl)lysine from octanoyl-[acyl-carrier-protein]: step 1/2. In terms of biological role, catalyzes the transfer of endogenously produced octanoic acid from octanoyl-acyl-carrier-protein onto the lipoyl domains of lipoate-dependent enzymes. Lipoyl-ACP can also act as a substrate although octanoyl-ACP is likely to be the physiological substrate. The chain is Octanoyltransferase from Leptospira interrogans serogroup Icterohaemorrhagiae serovar copenhageni (strain Fiocruz L1-130).